The chain runs to 112 residues: MLRSAPLALGLEPHPLNNSLAFPVFYHIHCYCPSPLLLSLLLHYTVLFSPFGARNHKLYIYIYIYIYIYIYMCINVCTYMNAGPRGVCSLCVYVCTHFNIYIHTYIYLLFVY.

3 helical membrane-spanning segments follow: residues 33-53 (PSPL…PFGA), 58-78 (LYIY…NVCT), and 91-111 (CVYV…LLFV).

The protein resides in the membrane. This is an uncharacterized protein from Saccharomyces cerevisiae (strain ATCC 204508 / S288c) (Baker's yeast).